The primary structure comprises 86 residues: UPF0297 protein SSP1144 (86 aa).

This sequence belongs to the UPF0297 family.

In Staphylococcus saprophyticus subsp. saprophyticus (strain ATCC 15305 / DSM 20229 / NCIMB 8711 / NCTC 7292 / S-41), this protein is UPF0297 protein SSP1144.